The following is a 118-amino-acid chain: Fluoride-specific ion channel FluC 2 (118 aa).

Helical transmembrane passes span 1 to 21 (MIEA…RFAI), 33 to 53 (FPLA…YIIG), 55 to 75 (GVTT…FTTF), and 91 to 111 (ISTF…FAFL). The Na(+) site is built by glycine 70 and threonine 73.

Belongs to the fluoride channel Fluc/FEX (TC 1.A.43) family.

The protein resides in the cell membrane. The enzyme catalyses fluoride(in) = fluoride(out). Na(+) is not transported, but it plays an essential structural role and its presence is essential for fluoride channel function. In terms of biological role, fluoride-specific ion channel. Important for reducing fluoride concentration in the cell, thus reducing its toxicity. The chain is Fluoride-specific ion channel FluC 2 from Bacillus cereus (strain ATCC 14579 / DSM 31 / CCUG 7414 / JCM 2152 / NBRC 15305 / NCIMB 9373 / NCTC 2599 / NRRL B-3711).